Consider the following 590-residue polypeptide: Leukocyte immunoglobulin-like receptor subfamily B member 5 (590 aa).

The signal sequence occupies residues 1–23; it reads MTLTLSVLICLGLSVGPRTCVQA. The Extracellular portion of the chain corresponds to 24–458; sequence GTLPKPTLWA…PQSGLGRHLG (435 aa). Ig-like C2-type domains are found at residues 27–116, 111–228, 224–313, and 337–418; these read PKPT…LELV, DPLE…SLLI, PSLL…DPLD, and GENV…LVVS. Residues cysteine 49 and cysteine 98 are joined by a disulfide bond. The N-linked (GlcNAc...) asparagine glycan is linked to asparagine 139. Intrachain disulfides connect cysteine 144/cysteine 195 and cysteine 244/cysteine 295. N-linked (GlcNAc...) asparagine glycosylation is found at asparagine 279 and asparagine 339. Cysteine 344 and cysteine 395 form a disulfide bridge. Residues 416-433 are compositionally biased toward low complexity; it reads VVSGPSGDPSLSPTGSTP. The interval 416-449 is disordered; it reads VVSGPSGDPSLSPTGSTPTPGPEDQPLTPTGLDP. A helical membrane pass occupies residues 459–479; the sequence is VVTGVSVAFVLLLFLLLFLLL. The Cytoplasmic segment spans residues 480–590; the sequence is RHRHQSKHRT…PSIYAPLAIH (111 aa). 2 disordered regions span residues 488–514 and 529–550; these read RTSA…KRAS and KDTQ…EAPQ. Position 514 is a phosphoserine (serine 514). The short motif at 552–557 is the ITIM motif 1 element; that stretch reads VTYAQL. The segment covering 562–578 has biased composition (basic and acidic residues); sequence LRREATEPPPSQEREPP. Residues 562–590 are disordered; it reads LRREATEPPPSQEREPPAEPSIYAPLAIH. The ITIM motif 2 signature appears at 582-587; sequence SIYAPL.

As to expression, detected in a natural killer (NK) cells.

It localises to the membrane. In terms of biological role, may act as receptor for class I MHC antigens. In Homo sapiens (Human), this protein is Leukocyte immunoglobulin-like receptor subfamily B member 5 (LILRB5).